Reading from the N-terminus, the 75-residue chain is Parvalbumin beta 3 (75 aa).

A1 bears the N-acetylalanine mark. The EF-hand domain maps to 26-61; that stretch reads YKAFFAKKAFFVIDQDKSGFIEEDELKLFLQVFSAG. D39, D41, S43, F45, E47, and E50 together coordinate Ca(2+).

Belongs to the parvalbumin family.

Its function is as follows. In muscle, parvalbumin is thought to be involved in relaxation after contraction. It binds two calcium ions. The chain is Parvalbumin beta 3 from Merluccius gayi (South Pacific hake).